We begin with the raw amino-acid sequence, 337 residues long: Ketol-acid reductoisomerase (NADP(+)) (337 aa).

One can recognise a KARI N-terminal Rossmann domain in the interval 3–183 (VEMFYDDDAD…GGTRAGVIKT (181 aa)). NADP(+)-binding positions include 26–29 (YGSQ), Ser52, Ser54, and 84–87 (DTAQ). His109 is a catalytic residue. Residue Gly135 coordinates NADP(+). Residues 184–329 (TFKEETETDL…AKLRGLMSWV (146 aa)) form the KARI C-terminal knotted domain. Residues Asp192, Glu196, Glu228, and Glu232 each contribute to the Mg(2+) site. Substrate is bound at residue Ser253.

This sequence belongs to the ketol-acid reductoisomerase family. It depends on Mg(2+) as a cofactor.

The catalysed reaction is (2R)-2,3-dihydroxy-3-methylbutanoate + NADP(+) = (2S)-2-acetolactate + NADPH + H(+). It catalyses the reaction (2R,3R)-2,3-dihydroxy-3-methylpentanoate + NADP(+) = (S)-2-ethyl-2-hydroxy-3-oxobutanoate + NADPH + H(+). The protein operates within amino-acid biosynthesis; L-isoleucine biosynthesis; L-isoleucine from 2-oxobutanoate: step 2/4. It participates in amino-acid biosynthesis; L-valine biosynthesis; L-valine from pyruvate: step 2/4. Functionally, involved in the biosynthesis of branched-chain amino acids (BCAA). Catalyzes an alkyl-migration followed by a ketol-acid reduction of (S)-2-acetolactate (S2AL) to yield (R)-2,3-dihydroxy-isovalerate. In the isomerase reaction, S2AL is rearranged via a Mg-dependent methyl migration to produce 3-hydroxy-3-methyl-2-ketobutyrate (HMKB). In the reductase reaction, this 2-ketoacid undergoes a metal-dependent reduction by NADPH to yield (R)-2,3-dihydroxy-isovalerate. This is Ketol-acid reductoisomerase (NADP(+)) from Nocardia farcinica (strain IFM 10152).